The following is a 191-amino-acid chain: Ribonuclease HII (191 aa).

The RNase H type-2 domain maps to 16–191 (INLIGIDEAG…KLHRKSFKLL (176 aa)). The a divalent metal cation site is built by aspartate 22, glutamate 23, and aspartate 110.

The protein belongs to the RNase HII family. The cofactor is Mn(2+). It depends on Mg(2+) as a cofactor.

The protein localises to the cytoplasm. It catalyses the reaction Endonucleolytic cleavage to 5'-phosphomonoester.. Its function is as follows. Endonuclease that specifically degrades the RNA of RNA-DNA hybrids. The chain is Ribonuclease HII (rnhB) from Campylobacter jejuni subsp. jejuni serotype O:2 (strain ATCC 700819 / NCTC 11168).